The sequence spans 144 residues: MLLPKRVKYRREHRGNMRGEAKGGKEVSFGEWGLQAQTASWITNRQIESARIAMTRYMKRGGKVWIKIFPHKPYTKKPLEVRMGSGKGSPEGWVAVVKPGKIMFEIAGVSEEVAREALRLASHKLPVKCKIVKRQETGGESNES.

It belongs to the universal ribosomal protein uL16 family. In terms of assembly, part of the 50S ribosomal subunit.

Its function is as follows. Binds 23S rRNA and is also seen to make contacts with the A and possibly P site tRNAs. The protein is Large ribosomal subunit protein uL16 of Lysinibacillus sphaericus (strain C3-41).